Reading from the N-terminus, the 54-residue chain is Large ribosomal subunit protein bL33 (54 aa).

Belongs to the bacterial ribosomal protein bL33 family.

The protein is Large ribosomal subunit protein bL33 of Parafrankia sp. (strain EAN1pec).